A 587-amino-acid chain; its full sequence is Kelch-like protein 3 (587 aa).

A disordered region spans residues 1 to 24; it reads MEGESVKPSPQPTEQAGDGEKNRR. The BTB domain maps to 50-117; that stretch reads CDVMIVAEDV…IYTAEIEVTE (68 aa). A BACK domain is found at 152-254; that stretch reads CLGIRAFADV…PRDYLVQTVE (103 aa). The residue at position 295 (threonine 295) is a Phosphothreonine. Kelch repeat units lie at residues 302-347, 348-394, 396-441, 442-490, 491-537, and 539-585; these read VMIV…FMAG, HVYA…VLND, LYAV…VVEG, KLYA…VLSG, QLYA…AVNG, and LYVV…VSAS. Threonine 375 bears the Phosphothreonine mark. A phosphoserine mark is found at serine 376 and serine 433.

It belongs to the KLHL3 family. As to quaternary structure, homodimer. Component of the BCR(KLHL3) E3 ubiquitin ligase complex, at least composed of CUL3 and KLHL3 and RBX1. Interacts with CLDN8. Post-translationally, phosphorylation at Ser-433 by PKA or PKC decreases the interaction with WNK1 and WNK4, leading to inhibit their degradation by the BCR(KLHL3) complex. Phosphorylated at Ser-433 by PKC in response to angiotensin II signaling, decreasing ability to promote degradation of WNK1 and WNK4, leading to activation of Na-Cl cotransporter SLC12A3/NCC. Phosphorylation at Ser-433 is increased by insulin. Dephosphorylated at Ser-433 by calcineurin PPP3CA, promoting degradation of WNK1 and WNK4.

The protein resides in the cytoplasm. It localises to the cytoskeleton. It is found in the cytosol. It functions in the pathway protein modification; protein ubiquitination. Substrate-specific adapter of a BCR (BTB-CUL3-RBX1) E3 ubiquitin ligase complex that acts as a regulator of ion transport in the distal nephron. The BCR(KLHL3) complex acts by mediating ubiquitination and degradation of WNK1 and WNK4, two activators of Na-Cl cotransporter SLC12A3/NCC in distal convoluted tubule cells of kidney, thereby regulating NaCl reabsorption. The BCR(KLHL3) complex also mediates ubiquitination and degradation of WNK3. The BCR(KLHL3) complex also mediates ubiquitination of CLDN8, a tight-junction protein required for paracellular chloride transport in the kidney, leading to its degradation. The sequence is that of Kelch-like protein 3 (Klhl3) from Rattus norvegicus (Rat).